Consider the following 251-residue polypeptide: uncharacterized protein (251 aa).

This sequence belongs to the FAM243 family.

This is an uncharacterized protein from Bos taurus (Bovine).